The following is a 124-amino-acid chain: Small ribosomal subunit protein uS13 (124 aa).

The tract at residues 94 to 124 is disordered; the sequence is RGLPVRGQRTKTNARTRKGPKRTIAGKKKAR.

Belongs to the universal ribosomal protein uS13 family. Part of the 30S ribosomal subunit. Forms a loose heterodimer with protein S19. Forms two bridges to the 50S subunit in the 70S ribosome.

In terms of biological role, located at the top of the head of the 30S subunit, it contacts several helices of the 16S rRNA. In the 70S ribosome it contacts the 23S rRNA (bridge B1a) and protein L5 of the 50S subunit (bridge B1b), connecting the 2 subunits; these bridges are implicated in subunit movement. Contacts the tRNAs in the A and P-sites. The protein is Small ribosomal subunit protein uS13 of Mycolicibacterium vanbaalenii (strain DSM 7251 / JCM 13017 / BCRC 16820 / KCTC 9966 / NRRL B-24157 / PYR-1) (Mycobacterium vanbaalenii).